The sequence spans 598 residues: MLRTTLAPLVLALALALPAAAATPESWPTFGTQGTQFVRDGKPYQLLSGAIHFQRIPRAYWKDRLQKARALGLNTVETYVFWNLVEPQQGQFDFSGNNDVAAFVKEAAAQGLNVILRPGPYACAEWEAGGYPAWLFGKGNIRVRSRDPRFLAASQAYLDALAKQVQPLLNHNGGPIIAVQVENEYGSYADDHAYMADNRAMYVKAGFDKALLFTSDGADMLANGTLPDTLAVVNFAPGEAKSAFDKLIKFRPDQPRMVGEYWAGWFDHWGKPHAATDARQQAEEFEWILRQGHSANLYMFIGGTSFGFMNGANFQNNPSDHYAPQTTSYDYDAILDEAGHPTPKFALMRDAIARVTGVQPPALPAPITTTTLPATPLRESASLWDNLPTPIAIDTPQPMEQFGQDYGYILYRTTITGPRKGPLYLGDVRDVARVYVDQRPVGSVERRLQQVSLEVEIPAGQHTLDVLVENSGRINYGTRMADGRAGLVDPVLLDSQQLTGWQAFPLPMRTPDSIRGWTGKAVQGPAFHRGTLRIGTPTDTYLDMRAFGKGFAWANGVNLGRHWNIGPQTALYLRPSSARVTTRWWSSTWTMLHPSVRG.

A signal peptide spans 1-21 (MLRTTLAPLVLALALALPAAA). The active-site Proton donor is the Glu-184. The Nucleophile role is filled by Glu-260.

Belongs to the glycosyl hydrolase 35 family.

It carries out the reaction Hydrolysis of terminal non-reducing beta-D-galactose residues in beta-D-galactosides.. In terms of biological role, preferentially hydrolyzes beta(1-&gt;3) galactosyl linkages over beta(1-&gt;4) linkages. This is Beta-galactosidase (bga) from Xanthomonas manihotis.